We begin with the raw amino-acid sequence, 676 residues long: Basic proline-rich protein (676 aa).

Residues 1–16 (MLPILLSVALLALSSA) form the signal peptide. Ser28 and Ser30 each carry phosphoserine. The disordered stretch occupies residues 29–676 (NSAEKFLRPP…PRPPPGPPPQ (648 aa)). Composition is skewed to pro residues over residues 36–50 (RPPP…PPPE), 71–424 (GPAP…PPAD), and 442–676 (PPPA…PPPQ). Positions 409–457 (APPGARPPPPPPPPADEPQQGPAPSGDKPKKKPPPPAGPPPPGPPSPGP) are excised as a propeptide.

In terms of tissue distribution, acinar cells and secretory granules of the parotid gland.

Its subcellular location is the secreted. Functionally, the parotid hormone stimulates dentinal fluid transport in teeth. The chain is Basic proline-rich protein from Sus scrofa (Pig).